The primary structure comprises 265 residues: ATP synthase subunit a (265 aa).

A run of 6 helical transmembrane segments spans residues 26 to 46 (VHLD…FFFY), 88 to 108 (IGSL…IDLI), 132 to 152 (DISA…FYTI), 168 to 188 (PFNH…TLLA), 195 to 217 (FRLF…MYMA), and 231 to 251 (LIWA…FMML).

Belongs to the ATPase A chain family. F-type ATPases have 2 components, CF(1) - the catalytic core - and CF(0) - the membrane proton channel. CF(1) has five subunits: alpha(3), beta(3), gamma(1), delta(1), epsilon(1). CF(0) has three main subunits: a(1), b(2) and c(9-12). The alpha and beta chains form an alternating ring which encloses part of the gamma chain. CF(1) is attached to CF(0) by a central stalk formed by the gamma and epsilon chains, while a peripheral stalk is formed by the delta and b chains.

It localises to the cell inner membrane. Key component of the proton channel; it plays a direct role in the translocation of protons across the membrane. The sequence is that of ATP synthase subunit a from Histophilus somni (strain 129Pt) (Haemophilus somnus).